Reading from the N-terminus, the 705-residue chain is MAREYPLNLYRNFGIMAHIDAGKTTCSERILYYTGKSHNIGEVHDGAATMDWMEQEQERGITITSAATTTFWERTEDGATADTPKHRLNIIDTPGHVDFTIEVERSLAVLDGAVCVLDANAGVEPQTETVWRQADRYKVPRMVFVNKMDKIGADFFNCVRMIEDRTGARAVPVGIPIGAETELEGLVDLVTMEEWLWQGEDLGASWVKAPIRDSLKDMAEEWRGKMIEAAVEEDDDAMMEYLEGNEPDVPTLRKLLRKGTLALHFVPVLGGSAFKNKGVQPLLNAVIDYLPSPLDVVDYMGFKPGDEEEVRNIARRADDNMAFSGLAFKIMNDPFVGSLTFTRVYSGVLKKGDTMLNSTKGKKERVGRMMMMHSNNREEIDEAFAGDIIALAGLKDTTTGDTLCDAKDPVVLETMTFPDPVIEIAVEPKTKGDQEKMSQGLARLAAEDPSFRVETDIESGQTIMKGMGELHLDILVDRLKREFKVEANIGAPQVAYRETISKEVEHTYTHKKQSGGSGQFAEVKLVITPTEPGEGYSFESRIVGGAVPKEYIPGVEKGIKSVMDSGPLAGFPVIDFKVALIDGKFHDVDSSVLAFEIAARMGMREGMKKAGAKLLEPIMKVEVITPEEYTGGIIGDLTSRRGQVSGQESRGNAIAINAFVPLANMFGYINTLRSMSSGRAQFTMLFDHYDPVPQNISDEIQAKYA.

Residues 8 to 294 form the tr-type G domain; that stretch reads NLYRNFGIMA…AVIDYLPSPL (287 aa). GTP-binding positions include 17 to 24, 92 to 96, and 146 to 149; these read AHIDAGKT, DTPGH, and NKMD.

It belongs to the TRAFAC class translation factor GTPase superfamily. Classic translation factor GTPase family. EF-G/EF-2 subfamily.

Its subcellular location is the cytoplasm. In terms of biological role, catalyzes the GTP-dependent ribosomal translocation step during translation elongation. During this step, the ribosome changes from the pre-translocational (PRE) to the post-translocational (POST) state as the newly formed A-site-bound peptidyl-tRNA and P-site-bound deacylated tRNA move to the P and E sites, respectively. Catalyzes the coordinated movement of the two tRNA molecules, the mRNA and conformational changes in the ribosome. The sequence is that of Elongation factor G from Ruegeria pomeroyi (strain ATCC 700808 / DSM 15171 / DSS-3) (Silicibacter pomeroyi).